The chain runs to 278 residues: Probable F-box protein At1g14315 (278 aa).

The F-box domain occupies 1-43 (MQLLPHDTVEDILERVPVKSLLRFKSACKQWKLTIESQYFQAK).

This chain is Probable F-box protein At1g14315, found in Arabidopsis thaliana (Mouse-ear cress).